Reading from the N-terminus, the 339-residue chain is MDIDLNNQTDNNELIVEDTENPKNPNSTNIEDVGDIGDIEDVGDIGDFENIKKTSVKKISFSPCVFLDLTESEISKYKEHIDKIYLEINQTDYFFENLSLSVKTNDYTNFFNRLGQPHYLLMQKIDDKEIVGSTCIIMRMYVFKCGDKLSRIKYWYISDTRILQEFHKLDLNLKLFKQMYHKLRLKSNRFYTICVDKYQSYTDHLMNKLKIYFNVEFKIDKLLIFLVETTLLRSIEKYFICAYGDIKYMLVPNKTYHIGNKVIKNIYHMQHSRYSSDKSSNISELPINSMVMFCFPEKSPLESIMENLHIKSLITATILSVGMNFFDWHDILTSDIYQI.

Positions 1–12 (MDIDLNNQTDNN) are enriched in polar residues. The tract at residues 1–30 (MDIDLNNQTDNNELIVEDTENPKNPNSTNI) is disordered.

This is an uncharacterized protein from Acanthamoeba polyphaga (Amoeba).